Consider the following 76-residue polypeptide: Probable 26S proteasome complex subunit dss-1 (76 aa).

2 disordered regions span residues 1–28 and 52–76; these read MSSTTVTKKDQKTVVEKKETEEEEFEEF and DDETHESEFSKQLKEELRKGGHPIA. Basic and acidic residues-rich tracts occupy residues 7–20 and 57–70; these read TKKDQKTVVEKKET and ESEFSKQLKEELRK.

Belongs to the DSS1/SEM1 family. Part of the 26S proteasome.

It localises to the nucleus. The protein resides in the cytoplasm. Subunit of the 26S proteasome which plays a role in ubiquitin-dependent proteolysis. Has an essential role in oogenesis and larval growth. Required for intestinal function and default lifespan. This Caenorhabditis briggsae protein is Probable 26S proteasome complex subunit dss-1.